Consider the following 80-residue polypeptide: Metallothionein-like protein type 2 (80 aa).

The protein belongs to the metallothionein superfamily. Type 15 family.

Metallothioneins have a high content of cysteine residues that bind various heavy metals. This is Metallothionein-like protein type 2 from Brassica campestris (Field mustard).